Here is a 124-residue protein sequence, read N- to C-terminus: Fluoride-specific ion channel FluC (124 aa).

The next 4 helical transmembrane spans lie at 3 to 23, 36 to 56, 66 to 86, and 100 to 120; these read YLLV…INTV, TFFI…YFAF, LFLM…SLDA, and LYVL…LALI. Residues G74 and T77 each contribute to the Na(+) site.

This sequence belongs to the fluoride channel Fluc/FEX (TC 1.A.43) family.

It is found in the cell inner membrane. The enzyme catalyses fluoride(in) = fluoride(out). Its activity is regulated as follows. Na(+) is not transported, but it plays an essential structural role and its presence is essential for fluoride channel function. Functionally, fluoride-specific ion channel. Important for reducing fluoride concentration in the cell, thus reducing its toxicity. The protein is Fluoride-specific ion channel FluC of Rhodopseudomonas palustris (strain BisB5).